We begin with the raw amino-acid sequence, 513 residues long: Aromatic amino acid aminotransferase 2 (513 aa).

2 positions are modified to phosphoserine: S90 and S92. Residues Y102, S143 to N144, N232, Y263, and T314 to S316 each bind pyridoxal 5'-phosphate. Residue N232 coordinates substrate. An N6-(pyridoxal phosphate)lysine modification is found at K317. R324 contributes to the pyridoxal 5'-phosphate binding site. Substrate is bound at residue R481.

The protein belongs to the class-I pyridoxal-phosphate-dependent aminotransferase family. Pyridoxal 5'-phosphate serves as cofactor.

The protein resides in the cytoplasm. The enzyme catalyses an aromatic L-alpha-amino acid + 2-oxoglutarate = an aromatic oxo-acid + L-glutamate. It catalyses the reaction an aromatic L-alpha-amino acid + 4-methylsulfanyl-2-oxobutanoate = an aromatic oxo-acid + L-methionine. It carries out the reaction L-kynurenine + 2-oxoglutarate = kynurenate + L-glutamate + H2O. Its pathway is amino-acid biosynthesis; L-methionine biosynthesis via salvage pathway; L-methionine from S-methyl-5-thio-alpha-D-ribose 1-phosphate: step 6/6. It functions in the pathway amino-acid degradation; L-kynurenine degradation; kynurenate from L-kynurenine: step 1/2. Functionally, general aromatic amino acid transaminase involved in several otherwise unrelated metabolic pathways. Mainly involved in tryptophan degradation. Active with phenylalanine, tyrosine and tryptophan as amino donors and with phenylpyruvate, hydroxyphenylpyruvate and pyruvate as amino acceptors. Does not accept glutamate or 2-oxoglutarate as substrates. Also active with methionine, leucine, glutamine and kynurenine. Catalyzes the formation of methionine from 2-keto-4-methylthiobutyrate (KMTB) in the methionine salvage pathway primarily using aromatic amino acids (tyrosine, phenylalanine and tryptophan) as the amino donors. Catalyzes the irreversible transamination of the L-tryptophan metabolite L-kynurenine to form kynurenic acid (KA) with pyruvate as amino acceptor. This Saccharomyces cerevisiae (strain ATCC 204508 / S288c) (Baker's yeast) protein is Aromatic amino acid aminotransferase 2.